A 227-amino-acid chain; its full sequence is UPF0758 protein CPE2144 (227 aa).

One can recognise an MPN domain in the interval 105–227 (KISKPSDVAK…FISLKEKDIL (123 aa)). Residues His176, His178, and Asp189 each contribute to the Zn(2+) site. The JAMM motif signature appears at 176-189 (HNHPSGDPTPSRDD).

It belongs to the UPF0758 family.

The sequence is that of UPF0758 protein CPE2144 from Clostridium perfringens (strain 13 / Type A).